Reading from the N-terminus, the 784-residue chain is Ribosome biogenesis protein BOP1 homolog (784 aa).

The segment covering 1-11 has biased composition (basic residues); it reads MTKKLALKRRG. The disordered stretch occupies residues 1-159; the sequence is MTKKLALKRR…DSDTSDEEDI (159 aa). Acidic residues-rich tracts occupy residues 27–36, 45–54, 62–73, and 84–111; these read SENEEEEEDL, EDSTDDEGID, SEELQFESDEEG, and AEEDEESSDEEDNEEEESTDGEEVEDEE. Composition is skewed to basic and acidic residues over residues 112-123 and 138-148; these read KDSKSKQTDDKP and LPKRDSSKPEY. A compositionally biased stretch (acidic residues) spans 149–158; sequence QDSDTSDEED. 7 WD repeats span residues 445-486, 488-526, 570-612, 615-653, 656-695, 699-738, and 754-784; these read GHTD…RTIE, DEVVRCVAWCPNPKLSIIAVATGNRLLLVNPKVGDKVLV, THFK…SQIP, KSKGLIQFVLFHPVKPCFFVATQHNIRIYDLVKQELVKK, TNSKWISGMSIHPKGDNLLVSTYDKKMLWFDLDLSTKPYQ, LHRNAVRSVAFHLRYPLFASGSDDQAVIVSHGMVYNDLLQ, and RDEFGVLDVNWHPVQPWVFSTGADSTIRLYT.

Belongs to the WD repeat BOP1/ERB1 family.

Its subcellular location is the nucleus. It localises to the nucleolus. It is found in the nucleoplasm. Functionally, required for maturation of ribosomal RNAs and formation of the large ribosomal subunit. In Drosophila melanogaster (Fruit fly), this protein is Ribosome biogenesis protein BOP1 homolog.